The following is a 558-amino-acid chain: Laccase-4 (558 aa).

An N-terminal signal peptide occupies residues 1–24 (MGSHMVWFLFLVSFFSVFPAPSES). 2 Plastocyanin-like domains span residues 32-148 (NVVM…PKRG) and 158-308 (NEKV…YSGT). Asn37 and Asn78 each carry an N-linked (GlcNAc...) asparagine glycan. Cu cation is bound by residues His82 and His84. An N-linked (GlcNAc...) asparagine glycan is attached at Asn114. Cu cation contacts are provided by His127 and His129. Asn187, Asn296, Asn323, Asn330, Asn373, Asn383, Asn400, Asn418, and Asn441 each carry an N-linked (GlcNAc...) asparagine glycan. Positions 408-542 (DFPKNPPHVF…KMAFLVENGK (135 aa)) constitute a Plastocyanin-like 3 domain. Residues His459, His462, and His464 each coordinate Cu cation. Asn479 carries N-linked (GlcNAc...) asparagine glycosylation. Residues His521, Cys522, His523, and His527 each contribute to the Cu cation site. Asn545 carries an N-linked (GlcNAc...) asparagine glycan.

Belongs to the multicopper oxidase family. Requires Cu cation as cofactor. As to expression, ubiquitous, with higher levels in the inflorescence stem.

It is found in the secreted. It localises to the extracellular space. The protein resides in the apoplast. It carries out the reaction 4 hydroquinone + O2 = 4 benzosemiquinone + 2 H2O. Lignin degradation and detoxification of lignin-derived products. Required for secondary xylem cell wall lignification. The protein is Laccase-4 (IRX12) of Arabidopsis thaliana (Mouse-ear cress).